A 390-amino-acid polypeptide reads, in one-letter code: GTPase Obg (390 aa).

One can recognise an Obg domain in the interval 1–159; that stretch reads MKFVDEASIL…RELLLELMLL (159 aa). The disordered stretch occupies residues 127 to 147; the sequence is NTRFKSSVNRTPRQKTNGTPG. Positions 129–145 are enriched in polar residues; that stretch reads RFKSSVNRTPRQKTNGT. In terms of domain architecture, OBG-type G spans 160–333; the sequence is ADVGMLGMPN…LCWDVMTFII (174 aa). GTP contacts are provided by residues 166-173, 191-195, 213-216, 283-286, and 314-316; these read GMPNAGKS, FTTLV, DIPG, NKID, and SAA. Mg(2+) is bound by residues S173 and T193.

Belongs to the TRAFAC class OBG-HflX-like GTPase superfamily. OBG GTPase family. Monomer. Mg(2+) is required as a cofactor.

The protein localises to the cytoplasm. Its function is as follows. An essential GTPase which binds GTP, GDP and possibly (p)ppGpp with moderate affinity, with high nucleotide exchange rates and a fairly low GTP hydrolysis rate. Plays a role in control of the cell cycle, stress response, ribosome biogenesis and in those bacteria that undergo differentiation, in morphogenesis control. This chain is GTPase Obg, found in Escherichia coli O7:K1 (strain IAI39 / ExPEC).